Consider the following 29-residue polypeptide: Cytochrome b6-f complex subunit 8 (29 aa).

Residues I3–V23 traverse the membrane as a helical segment.

The protein belongs to the PetN family. The 4 large subunits of the cytochrome b6-f complex are cytochrome b6, subunit IV (17 kDa polypeptide, PetD), cytochrome f and the Rieske protein, while the 4 small subunits are PetG, PetL, PetM and PetN. The complex functions as a dimer.

It localises to the plastid. Its subcellular location is the chloroplast thylakoid membrane. Its function is as follows. Component of the cytochrome b6-f complex, which mediates electron transfer between photosystem II (PSII) and photosystem I (PSI), cyclic electron flow around PSI, and state transitions. The chain is Cytochrome b6-f complex subunit 8 from Huperzia lucidula (Shining clubmoss).